The following is a 574-amino-acid chain: Proline--tRNA ligase (574 aa).

Belongs to the class-II aminoacyl-tRNA synthetase family. ProS type 1 subfamily. As to quaternary structure, homodimer.

Its subcellular location is the cytoplasm. The catalysed reaction is tRNA(Pro) + L-proline + ATP = L-prolyl-tRNA(Pro) + AMP + diphosphate. In terms of biological role, catalyzes the attachment of proline to tRNA(Pro) in a two-step reaction: proline is first activated by ATP to form Pro-AMP and then transferred to the acceptor end of tRNA(Pro). As ProRS can inadvertently accommodate and process non-cognate amino acids such as alanine and cysteine, to avoid such errors it has two additional distinct editing activities against alanine. One activity is designated as 'pretransfer' editing and involves the tRNA(Pro)-independent hydrolysis of activated Ala-AMP. The other activity is designated 'posttransfer' editing and involves deacylation of mischarged Ala-tRNA(Pro). The misacylated Cys-tRNA(Pro) is not edited by ProRS. In Marinomonas sp. (strain MWYL1), this protein is Proline--tRNA ligase.